The sequence spans 401 residues: Inositol phosphorylceramide synthase catalytic subunit AUR1 (401 aa).

Topologically, residues 1 to 41 (MANPFSRWFLSERPPNCHVADLETSLDPHQTLLKVQKYKPA) are cytoplasmic. A helical membrane pass occupies residues 42 to 62 (LSDWVHYIFLGSIMLFVFITN). Over 63-64 (PA) the chain is Lumenal. A helical membrane pass occupies residues 65-85 (PWIFKILFYCFLGTLFIIPAT). Residues 86-87 (SQ) lie on the Cytoplasmic side of the membrane. Residues 88–108 (FFFNALPILTWVALYFTSSYF) traverse the membrane as a helical segment. The Lumenal portion of the chain corresponds to 109–155 (PDDRRPPITVKVLPAVETILYGDNLSDILATSTNSFLDILAWLPYGL). Asn132 carries an N-linked (GlcNAc...) asparagine glycan. A helical transmembrane segment spans residues 156–176 (FHFGAPFVVAAILFVFGPPTV). The Cytoplasmic portion of the chain corresponds to 177-178 (LQ). Residues 179–199 (GYAFAFGYMNLFGVIMQNVFP) form a helical membrane-spanning segment. Over 200–245 (AAPPWYKILYGLQSANYDMHGSPGGLARIDKLLGINMYTTAFSNSS) the chain is Lumenal. The helical transmembrane segment at 246-266 (VIFGAFPSLHSGCATMEALFF) threads the bilayer. At 267 to 268 (CY) the chain is on the cytoplasmic side. Residues 269-289 (CFPKLKPLFIAYVCWLWWSTM) traverse the membrane as a helical segment. Residues 290–291 (YL) lie on the Lumenal side of the membrane. A helical membrane pass occupies residues 292–312 (THHYFVDLMAGSVLSYVIFQY). At 313–401 (TKYTHLPIVD…SITSLGVKRA (89 aa)) the chain is on the cytoplasmic side. A disordered region spans residues 374 to 401 (VSPSLFDGSTSVSRSSATSITSLGVKRA). A compositionally biased stretch (low complexity) spans 382-395 (STSVSRSSATSITS). A phosphoserine mark is found at Ser392 and Ser395.

It belongs to the AUR1 family. In terms of assembly, component of the inositol phosphorylceramide synthase complex composed of at least AUR1 and KEI1.

The protein localises to the golgi apparatus. Its subcellular location is the golgi stack membrane. It carries out the reaction an N-(2R-hydroxy-very-long-chain fatty acyl)-(R)-4-hydroxysphingoid base + a 1,2-diacyl-sn-glycero-3-phospho-(1D-myo-inositol) = a 1D-myo-inositol-1-phospho-N-[(R)-2-hydroxy-very-long-chain fatty acyl]-(R)-4-hydroxysphingoid base + a 1,2-diacyl-sn-glycerol. Its activity is regulated as follows. Inhibited by aureobasidin A (AbA), khafrefungin and rustmicin. Functionally, catalytic component of the inositol phosphorylceramide synthase which catalyzes the addition of a phosphorylinositol group onto ceramide to form inositol phosphorylceramide, an essential step in sphingolipid biosynthesis. The sequence is that of Inositol phosphorylceramide synthase catalytic subunit AUR1 from Saccharomyces cerevisiae (strain ATCC 204508 / S288c) (Baker's yeast).